The chain runs to 211 residues: Pyridoxine/pyridoxamine 5'-phosphate oxidase (211 aa).

Substrate-binding positions include 7-10 (RTDY) and Lys-65. Residues 60-65 (RIVLIK), 75-76 (FT), Arg-81, and Lys-82 each bind FMN. Positions 122, 126, and 130 each coordinate substrate. FMN is bound by residues 139–140 (QS) and Trp-183. Substrate is bound at residue 189 to 191 (RLH). Arg-193 contacts FMN.

The protein belongs to the pyridoxamine 5'-phosphate oxidase family. In terms of assembly, homodimer. FMN serves as cofactor.

The enzyme catalyses pyridoxamine 5'-phosphate + O2 + H2O = pyridoxal 5'-phosphate + H2O2 + NH4(+). It carries out the reaction pyridoxine 5'-phosphate + O2 = pyridoxal 5'-phosphate + H2O2. It functions in the pathway cofactor metabolism; pyridoxal 5'-phosphate salvage; pyridoxal 5'-phosphate from pyridoxamine 5'-phosphate: step 1/1. It participates in cofactor metabolism; pyridoxal 5'-phosphate salvage; pyridoxal 5'-phosphate from pyridoxine 5'-phosphate: step 1/1. In terms of biological role, catalyzes the oxidation of either pyridoxine 5'-phosphate (PNP) or pyridoxamine 5'-phosphate (PMP) into pyridoxal 5'-phosphate (PLP). The sequence is that of Pyridoxine/pyridoxamine 5'-phosphate oxidase from Herminiimonas arsenicoxydans.